Here is a 112-residue protein sequence, read N- to C-terminus: Large ribosomal subunit protein eL36y (112 aa).

Over residues 79-88 the composition is skewed to basic residues; sequence KLGTHKRAKR. Residues 79 to 112 are disordered; that stretch reads KLGTHKRAKRKREEMSSVLRKMRSGGGGATEKKK. The segment covering 102–112 has biased composition (gly residues); the sequence is SGGGGATEKKK.

This sequence belongs to the eukaryotic ribosomal protein eL36 family.

The protein is Large ribosomal subunit protein eL36y (RPL36B) of Arabidopsis thaliana (Mouse-ear cress).